We begin with the raw amino-acid sequence, 322 residues long: Beta-ketoacyl-[acyl-carrier-protein] synthase III (322 aa).

Active-site residues include Cys112 and His249. Residues 250-254 form an ACP-binding region; it reads QANQR. Asn279 is a catalytic residue.

This sequence belongs to the thiolase-like superfamily. FabH family. As to quaternary structure, homodimer.

The protein resides in the cytoplasm. The catalysed reaction is malonyl-[ACP] + acetyl-CoA + H(+) = 3-oxobutanoyl-[ACP] + CO2 + CoA. Its pathway is lipid metabolism; fatty acid biosynthesis. Its function is as follows. Catalyzes the condensation reaction of fatty acid synthesis by the addition to an acyl acceptor of two carbons from malonyl-ACP. Catalyzes the first condensation reaction which initiates fatty acid synthesis and may therefore play a role in governing the total rate of fatty acid production. Possesses both acetoacetyl-ACP synthase and acetyl transacylase activities. Its substrate specificity determines the biosynthesis of branched-chain and/or straight-chain of fatty acids. This is Beta-ketoacyl-[acyl-carrier-protein] synthase III from Caulobacter vibrioides (strain ATCC 19089 / CIP 103742 / CB 15) (Caulobacter crescentus).